The sequence spans 366 residues: D-alanine--D-alanine ligase (366 aa).

Residues 148 to 357 form the ATP-grasp domain; sequence KMTFEQAGLA…FPELVDRLIQ (210 aa). An ATP-binding site is contributed by 184-239; sequence EAALGYPAFVKPANLGSSVGIAKVRSRQELEAALDNAASYDRRLVVEAGVVAREVE. Mg(2+)-binding residues include D310, E324, and N326.

This sequence belongs to the D-alanine--D-alanine ligase family. It depends on Mg(2+) as a cofactor. The cofactor is Mn(2+).

Its subcellular location is the cytoplasm. It catalyses the reaction 2 D-alanine + ATP = D-alanyl-D-alanine + ADP + phosphate + H(+). It participates in cell wall biogenesis; peptidoglycan biosynthesis. Functionally, cell wall formation. The chain is D-alanine--D-alanine ligase from Nostoc punctiforme (strain ATCC 29133 / PCC 73102).